Consider the following 470-residue polypeptide: 3-isopropylmalate dehydratase large subunit (470 aa).

[4Fe-4S] cluster contacts are provided by cysteine 348, cysteine 409, and cysteine 412.

The protein belongs to the aconitase/IPM isomerase family. LeuC type 1 subfamily. As to quaternary structure, heterodimer of LeuC and LeuD. Requires [4Fe-4S] cluster as cofactor.

The enzyme catalyses (2R,3S)-3-isopropylmalate = (2S)-2-isopropylmalate. It functions in the pathway amino-acid biosynthesis; L-leucine biosynthesis; L-leucine from 3-methyl-2-oxobutanoate: step 2/4. Functionally, catalyzes the isomerization between 2-isopropylmalate and 3-isopropylmalate, via the formation of 2-isopropylmaleate. The polypeptide is 3-isopropylmalate dehydratase large subunit (Thioalkalivibrio sulfidiphilus (strain HL-EbGR7)).